A 1065-amino-acid chain; its full sequence is Tubulin glycylase 3C (1065 aa).

Disordered stretches follow at residues 1 to 146 (MSSL…REDK), 158 to 182 (IREQ…TKSK), 301 to 326 (STQK…DIAK), 341 to 360 (EKKR…KEQL), 381 to 482 (FFVD…GNGS), and 708 to 755 (NKQK…EKQM). Positions 23-53 (QEGNQEDLNNQNDHNLNNNELDSLSSPPSDN) are enriched in low complexity. Positions 54–63 (YNEEEFEQED) are enriched in acidic residues. Residues 73–92 (QNASQNNISQTQRISQTQLP) show a composition bias toward polar residues. Residues 122 to 146 (LMEKKKKEQEEKEKKELKLKKREDK) show a composition bias toward basic and acidic residues. Positions 166–179 (LESQTEQSDHSNVT) are enriched in polar residues. Residues 313-326 (EGDKEKDDKKDIAK) are compositionally biased toward basic and acidic residues. Residues 385-403 (VPEKKPKKEKKKNESKEDN) are compositionally biased toward basic and acidic residues. The segment covering 404-423 (IQITSPKLNSTKSLSSQITR) has biased composition (polar residues). A compositionally biased stretch (basic and acidic residues) spans 424–450 (KTNDAKKVEKLPKIKDSNKENHSKERN). The segment covering 451-479 (EDNEEGDDGEYECDEGDEGASDGEDEDDG) has biased composition (acidic residues). The TTL domain maps to 633–1009 (YFEKDPDIEK…DYGMEKSKKA (377 aa)). A compositionally biased stretch (basic residues) spans 709 to 721 (KQKPKKKKKKSKK). Over residues 722–733 (DKQQGDTEKKEE) the composition is skewed to basic and acidic residues. Acidic residues predominate over residues 734–754 (EEGEAEDEEEDEEDEEEEEKQ). ATP contacts are provided by residues 821-824 (QKYI), lysine 834, and aspartate 836.

The protein resides in the cell projection. It localises to the cilium. Its subcellular location is the cytoplasm. The protein localises to the cytoskeleton. It is found in the cilium axoneme. Probable glycylase which modifies tubulin, generating side chains of glycine on the gamma-carboxyl groups of specific glutamate residues within the C-terminal tail of tubulin. This Tetrahymena thermophila (strain SB210) protein is Tubulin glycylase 3C (TTLL3C).